A 381-amino-acid polypeptide reads, in one-letter code: Chaperone protein DnaJ (381 aa).

Residues 5–73 (DYYEVLGVGK…EKKAAYDQYG (69 aa)) enclose the J domain. Residues 141 to 219 (GHEAQIRVPH…CHGQGKLKSQ (79 aa)) form a CR-type zinc finger. Residues Cys154, Cys157, Cys171, Cys174, Cys193, Cys196, Cys207, and Cys210 each coordinate Zn(2+). 4 CXXCXGXG motif repeats span residues 154–161 (CDHCHGNG), 171–178 (CPTCHGAG), 193–200 (CPKCHGSG), and 207–214 (CTKCHGQG). The interval 357-381 (SVHEGGSRHSPQEQSWLDKVKSFFS) is disordered.

This sequence belongs to the DnaJ family. Homodimer. Zn(2+) is required as a cofactor.

The protein resides in the cytoplasm. Its function is as follows. Participates actively in the response to hyperosmotic and heat shock by preventing the aggregation of stress-denatured proteins and by disaggregating proteins, also in an autonomous, DnaK-independent fashion. Unfolded proteins bind initially to DnaJ; upon interaction with the DnaJ-bound protein, DnaK hydrolyzes its bound ATP, resulting in the formation of a stable complex. GrpE releases ADP from DnaK; ATP binding to DnaK triggers the release of the substrate protein, thus completing the reaction cycle. Several rounds of ATP-dependent interactions between DnaJ, DnaK and GrpE are required for fully efficient folding. Also involved, together with DnaK and GrpE, in the DNA replication of plasmids through activation of initiation proteins. This chain is Chaperone protein DnaJ, found in Cupriavidus necator (strain ATCC 17699 / DSM 428 / KCTC 22496 / NCIMB 10442 / H16 / Stanier 337) (Ralstonia eutropha).